The following is a 340-amino-acid chain: Melanin-concentrating hormone receptor 2 (340 aa).

At Met1 to Ser39 the chain is on the extracellular side. 2 N-linked (GlcNAc...) asparagine glycosylation sites follow: Asn10 and Asn17. Residues Met40–Ile60 form a helical membrane-spanning segment. At Arg61–Asp69 the chain is on the cytoplasmic side. Residues Ile70–Ile90 form a helical membrane-spanning segment. Topologically, residues His91–Pro104 are extracellular. The chain crosses the membrane as a helical span at residues Leu105–Val129. Residues Asp130–Asn154 lie on the Cytoplasmic side of the membrane. The chain crosses the membrane as a helical span at residues Leu155–Ile175. At Lys176–Tyr200 the chain is on the extracellular side. Residues Leu201 to Leu221 form a helical membrane-spanning segment. At Cys222–Met252 the chain is on the cytoplasmic side. The chain crosses the membrane as a helical span at residues Val253 to Val273. The Extracellular portion of the chain corresponds to Asn274–Tyr288. A helical transmembrane segment spans residues Tyr289 to Leu309. Over Ser310–Phe340 the chain is Cytoplasmic.

This sequence belongs to the G-protein coupled receptor 1 family. Specifically expressed in the brain, with highest levels in cerebral cortex, hippocampus and amygdala. No expression detected in the cerebellum, thalamus or hypothalamus.

It is found in the cell membrane. Functionally, receptor for melanin-concentrating hormone, coupled to G proteins that activate phosphoinositide hydrolysis. The sequence is that of Melanin-concentrating hormone receptor 2 (MCHR2) from Homo sapiens (Human).